The chain runs to 264 residues: S-adenosylmethionine decarboxylase proenzyme (264 aa).

Residue Ser-113 is the Schiff-base intermediate with substrate; via pyruvic acid of the active site. Ser-113 is subject to Pyruvic acid (Ser); by autocatalysis. His-118 serves as the catalytic Proton acceptor; for processing activity. Cys-141 functions as the Proton donor; for catalytic activity in the catalytic mechanism.

It belongs to the prokaryotic AdoMetDC family. Type 2 subfamily. Heterooctamer of four alpha and four beta chains arranged as a tetramer of alpha/beta heterodimers. The cofactor is pyruvate. Post-translationally, is synthesized initially as an inactive proenzyme. Formation of the active enzyme involves a self-maturation process in which the active site pyruvoyl group is generated from an internal serine residue via an autocatalytic post-translational modification. Two non-identical subunits are generated from the proenzyme in this reaction, and the pyruvate is formed at the N-terminus of the alpha chain, which is derived from the carboxyl end of the proenzyme. The post-translation cleavage follows an unusual pathway, termed non-hydrolytic serinolysis, in which the side chain hydroxyl group of the serine supplies its oxygen atom to form the C-terminus of the beta chain, while the remainder of the serine residue undergoes an oxidative deamination to produce ammonia and the pyruvoyl group blocking the N-terminus of the alpha chain.

The catalysed reaction is S-adenosyl-L-methionine + H(+) = S-adenosyl 3-(methylsulfanyl)propylamine + CO2. It participates in amine and polyamine biosynthesis; S-adenosylmethioninamine biosynthesis; S-adenosylmethioninamine from S-adenosyl-L-methionine: step 1/1. In terms of biological role, catalyzes the decarboxylation of S-adenosylmethionine to S-adenosylmethioninamine (dcAdoMet), the propylamine donor required for the synthesis of the polyamines spermine and spermidine from the diamine putrescine. This chain is S-adenosylmethionine decarboxylase proenzyme, found in Xylella fastidiosa (strain 9a5c).